Here is a 418-residue protein sequence, read N- to C-terminus: Deoxyribonuclease Tat-D (418 aa).

Positions 185, 226, 277, and 327 each coordinate a divalent metal cation.

It belongs to the metallo-dependent hydrolases superfamily. TatD-type hydrolase family. It depends on Mg(2+) as a cofactor.

The protein localises to the cytoplasm. Its function is as follows. Has both endo- and exonuclease activities. Incises double-stranded DNA without obvious specificity via its endonuclease activity and excises the DNA from the 3'-to 5'-end by its exonuclease activity. May have a role in apoptosis. This chain is Deoxyribonuclease Tat-D, found in Saccharomyces cerevisiae (strain ATCC 204508 / S288c) (Baker's yeast).